Here is a 1580-residue protein sequence, read N- to C-terminus: Pentafunctional AROM polypeptide (1580 aa).

The 3-dehydroquinate synthase stretch occupies residues Met1 to Asn381. NAD(+)-binding positions include Asp44–Thr46, Glu81–Lys84, Gly114–Val116, and Asp119. Arg130 lines the 7-phospho-2-dehydro-3-deoxy-D-arabino-heptonate pocket. Thr139 to Thr140 contributes to the NAD(+) binding site. Asp146 and Lys152 together coordinate 7-phospho-2-dehydro-3-deoxy-D-arabino-heptonate. Lys161 is a binding site for NAD(+). 7-phospho-2-dehydro-3-deoxy-D-arabino-heptonate is bound at residue Asn162. NAD(+) contacts are provided by residues Phe179 to Thr182 and Asn190. Glu194 contributes to the Zn(2+) binding site. Position 247 (Lys247) interacts with 7-phospho-2-dehydro-3-deoxy-D-arabino-heptonate. Glu257 acts as the Proton acceptor; for 3-dehydroquinate synthase activity in catalysis. Residues Arg261–Asn265 and His268 each bind 7-phospho-2-dehydro-3-deoxy-D-arabino-heptonate. His268 contributes to the Zn(2+) binding site. The active-site Proton acceptor; for 3-dehydroquinate synthase activity is the His272. 7-phospho-2-dehydro-3-deoxy-D-arabino-heptonate-binding residues include His284 and Lys353. Position 284 (His284) interacts with Zn(2+). The interval Val394–Ala838 is EPSP synthase. Cys820 acts as the For EPSP synthase activity in catalysis. Positions Ala857–Ser1048 are shikimate kinase. Gly863–Thr870 is a binding site for ATP. The 3-dehydroquinase stretch occupies residues Leu1049–Glu1269. Residue His1172 is the Proton acceptor; for 3-dehydroquinate dehydratase activity of the active site. The Schiff-base intermediate with substrate; for 3-dehydroquinate dehydratase activity role is filled by Lys1200. The segment at Ser1282 to Ile1580 is shikimate dehydrogenase.

It in the N-terminal section; belongs to the sugar phosphate cyclases superfamily. Dehydroquinate synthase family. The protein in the 2nd section; belongs to the EPSP synthase family. In the 3rd section; belongs to the shikimate kinase family. This sequence in the 4th section; belongs to the type-I 3-dehydroquinase family. It in the C-terminal section; belongs to the shikimate dehydrogenase family. As to quaternary structure, homodimer. The cofactor is Zn(2+).

It localises to the cytoplasm. It carries out the reaction 7-phospho-2-dehydro-3-deoxy-D-arabino-heptonate = 3-dehydroquinate + phosphate. The catalysed reaction is 3-dehydroquinate = 3-dehydroshikimate + H2O. It catalyses the reaction shikimate + NADP(+) = 3-dehydroshikimate + NADPH + H(+). The enzyme catalyses shikimate + ATP = 3-phosphoshikimate + ADP + H(+). It carries out the reaction 3-phosphoshikimate + phosphoenolpyruvate = 5-O-(1-carboxyvinyl)-3-phosphoshikimate + phosphate. The protein operates within metabolic intermediate biosynthesis; chorismate biosynthesis; chorismate from D-erythrose 4-phosphate and phosphoenolpyruvate: step 2/7. It participates in metabolic intermediate biosynthesis; chorismate biosynthesis; chorismate from D-erythrose 4-phosphate and phosphoenolpyruvate: step 3/7. It functions in the pathway metabolic intermediate biosynthesis; chorismate biosynthesis; chorismate from D-erythrose 4-phosphate and phosphoenolpyruvate: step 4/7. Its pathway is metabolic intermediate biosynthesis; chorismate biosynthesis; chorismate from D-erythrose 4-phosphate and phosphoenolpyruvate: step 5/7. The protein operates within metabolic intermediate biosynthesis; chorismate biosynthesis; chorismate from D-erythrose 4-phosphate and phosphoenolpyruvate: step 6/7. Its function is as follows. The AROM polypeptide catalyzes 5 consecutive enzymatic reactions in prechorismate polyaromatic amino acid biosynthesis. The sequence is that of Pentafunctional AROM polypeptide from Uncinocarpus reesii (strain UAMH 1704).